Here is a 406-residue protein sequence, read N- to C-terminus: Cysteine desulfurase (406 aa).

At K226 the chain carries N6-(pyridoxal phosphate)lysine. The Cysteine persulfide intermediate role is filled by C364.

The protein belongs to the class-V pyridoxal-phosphate-dependent aminotransferase family. Csd subfamily. Homodimer. Interacts with SufE and the SufBCD complex composed of SufB, SufC and SufD. The interaction with SufE is required to mediate the direct transfer of the sulfur atom from the S-sulfanylcysteine. Pyridoxal 5'-phosphate is required as a cofactor.

The protein resides in the cytoplasm. It catalyses the reaction (sulfur carrier)-H + L-cysteine = (sulfur carrier)-SH + L-alanine. The enzyme catalyses L-selenocysteine + AH2 = hydrogenselenide + L-alanine + A + H(+). The protein operates within cofactor biosynthesis; iron-sulfur cluster biosynthesis. In terms of biological role, cysteine desulfurases mobilize the sulfur from L-cysteine to yield L-alanine, an essential step in sulfur metabolism for biosynthesis of a variety of sulfur-containing biomolecules. Component of the suf operon, which is activated and required under specific conditions such as oxidative stress and iron limitation. Acts as a potent selenocysteine lyase in vitro, that mobilizes selenium from L-selenocysteine. Selenocysteine lyase activity is however unsure in vivo. This Salmonella dublin (strain CT_02021853) protein is Cysteine desulfurase.